We begin with the raw amino-acid sequence, 386 residues long: Ribonucleoside-diphosphate reductase subunit M2 (386 aa).

S20 carries the post-translational modification Phosphoserine. Residue T33 is modified to Phosphothreonine. Residues 49–51 (RRI) carry the Cy motif. The Fe cation site is built by D139, E170, and H173. Y177 is a catalytic residue. 3 residues coordinate Fe cation: E233, E267, and H270.

This sequence belongs to the ribonucleoside diphosphate reductase small chain family. As to quaternary structure, heterodimer of a large and a small subunit. Interacts (via Cy motif and when phosphorylated at Thr-33) with CCNF; the interaction occurs exclusively in G2 and early M. The cofactor is Fe cation. Phosphorylation on Ser-20 relieves the inhibitory effect on Wnt signaling. Phosphorylated on Thr-33 by CDK1 and CDK2; predominantly in G2 and M phase. Post-translationally, ubiquitinated by the SCF(CCNF) E3 ubiquitin-protein ligase complex; leading to its degradation by the proteasome.

The protein resides in the cytoplasm. The protein localises to the nucleus. The catalysed reaction is a 2'-deoxyribonucleoside 5'-diphosphate + [thioredoxin]-disulfide + H2O = a ribonucleoside 5'-diphosphate + [thioredoxin]-dithiol. Functionally, provides the precursors necessary for DNA synthesis. Catalyzes the biosynthesis of deoxyribonucleotides from the corresponding ribonucleotides. Inhibits Wnt signaling. In Mesocricetus auratus (Golden hamster), this protein is Ribonucleoside-diphosphate reductase subunit M2 (RRM2).